We begin with the raw amino-acid sequence, 168 residues long: Lipid transfer protein EARLI 1 (168 aa).

A signal peptide spans 1 to 25; that stretch reads MASKNSASIALFFALNIIFFTLTAA. Residues 32–81 are disordered; the sequence is PSPKHKPVPSPKPKPVPSPKPKPVPSPSVPSPSVPSPNPRPVTPPRTPGS. One copy of the A-1 repeat lies at 34–41; sequence PKHKPVPS. The 3 X 8 AA repeats A of P-K-[HP]-K-P-V-P-S stretch occupies residues 34-57; it reads PKHKPVPSPKPKPVPSPKPKPVPS. Residues 39 to 78 show a composition bias toward pro residues; sequence VPSPKPKPVPSPKPKPVPSPSVPSPSVPSPNPRPVTPPRT. An A-2 repeat occupies 42–49; it reads PKPKPVPS. One copy of the A-3 repeat lies at 50–57; that stretch reads PKPKPVPS. The stretch at 58-62 is one B-1 repeat; the sequence is PSVPS. Residues 58–67 are 2 X 58 AA tandem repeats B of P-S-V-P-S; that stretch reads PSVPSPSVPS. The stretch at 63–67 is one B-2 repeat; sequence PSVPS.

This sequence belongs to the plant LTP family. PEARLI1 subfamily. As to expression, mostly expressed in aerial part of seedlings, and, to a lower extent, in roots. Higher basal levels in early-flowering ecotypes.

It localises to the secreted. Its subcellular location is the cell wall. Its function is as follows. Probable lipid transfer protein (LTP). May improve freezing survival. Seems to control the flowering process and lignin synthesis. Has an auxiliary role for germinability and early seedling development under low temperature and salt stress conditions, probably in an abscisic acid- (ABA) dependent manner. Confers resistance to Botrytis cinerea and exhibits anti-fungal activity, at least against S.cerevisiae, B.cinerea and Fusarium oxysporum, probably by increasing their membrane permeability. This Arabidopsis thaliana (Mouse-ear cress) protein is Lipid transfer protein EARLI 1 (EARLI1).